A 910-amino-acid polypeptide reads, in one-letter code: Protein translocase subunit SecA (910 aa).

Residues glutamine 86, 104 to 108 (GEGKT), and aspartate 499 each bind ATP. 4 residues coordinate Zn(2+): cysteine 894, cysteine 896, cysteine 905, and histidine 906.

This sequence belongs to the SecA family. As to quaternary structure, monomer and homodimer. Part of the essential Sec protein translocation apparatus which comprises SecA, SecYEG and auxiliary proteins SecDF-YajC and YidC. It depends on Zn(2+) as a cofactor.

It is found in the cell inner membrane. The protein localises to the cytoplasm. It catalyses the reaction ATP + H2O + cellular proteinSide 1 = ADP + phosphate + cellular proteinSide 2.. In terms of biological role, part of the Sec protein translocase complex. Interacts with the SecYEG preprotein conducting channel. Has a central role in coupling the hydrolysis of ATP to the transfer of proteins into and across the cell membrane, serving both as a receptor for the preprotein-SecB complex and as an ATP-driven molecular motor driving the stepwise translocation of polypeptide chains across the membrane. This is Protein translocase subunit SecA from Rickettsia bellii (strain RML369-C).